The primary structure comprises 206 residues: Protein-methionine-sulfoxide reductase heme-binding subunit MsrQ (206 aa).

The next 6 membrane-spanning stretches (helical) occupy residues 14–34 (IKPL…WLGA), 45–65 (FLTR…LAIT), 82–102 (MCGL…VWWD), 118–138 (PFIT…ATST), 149–169 (WQVL…HFWW), and 179–199 (QPLL…AAWW).

The protein belongs to the MsrQ family. In terms of assembly, heterodimer of a catalytic subunit (MsrP) and a heme-binding subunit (MsrQ). It depends on FMN as a cofactor. Heme b serves as cofactor.

The protein resides in the cell inner membrane. Part of the MsrPQ system that repairs oxidized periplasmic proteins containing methionine sulfoxide residues (Met-O), using respiratory chain electrons. Thus protects these proteins from oxidative-stress damage caused by reactive species of oxygen and chlorine generated by the host defense mechanisms. MsrPQ is essential for the maintenance of envelope integrity under bleach stress, rescuing a wide series of structurally unrelated periplasmic proteins from methionine oxidation. MsrQ provides electrons for reduction to the reductase catalytic subunit MsrP, using the quinone pool of the respiratory chain. This Bordetella bronchiseptica (strain ATCC BAA-588 / NCTC 13252 / RB50) (Alcaligenes bronchisepticus) protein is Protein-methionine-sulfoxide reductase heme-binding subunit MsrQ.